A 473-amino-acid polypeptide reads, in one-letter code: Cysteine--tRNA ligase (473 aa).

Residue Cys30 coordinates Zn(2+). The 'HIGH' region signature appears at 32-42 (MTVYDYCHIGH). Zn(2+)-binding residues include Cys213, His238, and Glu242. A 'KMSKS' region motif is present at residues 270–274 (KMSKS). Lys273 contributes to the ATP binding site.

This sequence belongs to the class-I aminoacyl-tRNA synthetase family. In terms of assembly, monomer. It depends on Zn(2+) as a cofactor.

The protein localises to the cytoplasm. It catalyses the reaction tRNA(Cys) + L-cysteine + ATP = L-cysteinyl-tRNA(Cys) + AMP + diphosphate. This Acinetobacter baumannii (strain SDF) protein is Cysteine--tRNA ligase.